The sequence spans 239 residues: Serine protease SplF (239 aa).

The signal sequence occupies residues Met1 to Ala36. Active-site charge relay system residues include His75, Asp114, and Ser192.

It belongs to the peptidase S1B family.

The protein localises to the secreted. This chain is Serine protease SplF (splF), found in Staphylococcus aureus (strain USA300).